Here is a 261-residue protein sequence, read N- to C-terminus: 1,6-dihydroxycyclohexa-2,4-diene-1-carboxylate dehydrogenase (261 aa).

13-37 (IVTGAAQGIGRGVALRIAQEGGCLI) serves as a coordination point for NAD(+). Residue Ser-145 participates in substrate binding. Catalysis depends on Tyr-156, which acts as the Proton acceptor.

This sequence belongs to the short-chain dehydrogenases/reductases (SDR) family. In terms of assembly, homodimer.

The enzyme catalyses (1R,6S)-1,6-dihydroxycyclohexa-2,4-diene-1-carboxylate + NAD(+) = catechol + CO2 + NADH. The protein operates within aromatic compound metabolism; benzoate degradation via hydroxylation; catechol from benzoate: step 2/2. Functionally, degradation of 2-hydro-1,2-dihydroxy benzoate (DHB) to catechol. This Acinetobacter baylyi (strain ATCC 33305 / BD413 / ADP1) protein is 1,6-dihydroxycyclohexa-2,4-diene-1-carboxylate dehydrogenase (benD).